The chain runs to 363 residues: UDP-3-O-acylglucosamine N-acyltransferase (363 aa).

The Proton acceptor role is filled by His252.

It belongs to the transferase hexapeptide repeat family. LpxD subfamily. In terms of assembly, homotrimer.

It carries out the reaction a UDP-3-O-[(3R)-3-hydroxyacyl]-alpha-D-glucosamine + a (3R)-hydroxyacyl-[ACP] = a UDP-2-N,3-O-bis[(3R)-3-hydroxyacyl]-alpha-D-glucosamine + holo-[ACP] + H(+). Its pathway is bacterial outer membrane biogenesis; LPS lipid A biosynthesis. Catalyzes the N-acylation of UDP-3-O-acylglucosamine using 3-hydroxyacyl-ACP as the acyl donor. Is involved in the biosynthesis of lipid A, a phosphorylated glycolipid that anchors the lipopolysaccharide to the outer membrane of the cell. This Cupriavidus taiwanensis (strain DSM 17343 / BCRC 17206 / CCUG 44338 / CIP 107171 / LMG 19424 / R1) (Ralstonia taiwanensis (strain LMG 19424)) protein is UDP-3-O-acylglucosamine N-acyltransferase.